The chain runs to 353 residues: uncharacterized protein (353 aa).

Disordered regions lie at residues 1–24, 245–280, and 305–353; these read MSTSRNVPNKKNNTKQQKYQQQSQ, NKSSNRTHHKSGDKSTVKSTDKQVEKKVEESSEKVP, and AAGK…DLNN. The span at 9 to 24 shows a compositional bias: low complexity; the sequence is NKKNNTKQQKYQQQSQ. Basic and acidic residues predominate over residues 254 to 280; the sequence is KSGDKSTVKSTDKQVEKKVEESSEKVP. Positions 321–332 are enriched in low complexity; sequence VTTSTSESTVEV. Positions 342–353 are enriched in acidic residues; it reads EPDEEVFEDLNN.

This is an uncharacterized protein from Acanthamoeba polyphaga mimivirus (APMV).